The following is a 504-amino-acid chain: Anaerobic nitric oxide reductase transcription regulator NorR (504 aa).

A 4-aspartylphosphate modification is found at D57. Residues 187–416 enclose the Sigma-54 factor interaction domain; the sequence is MIGLSPGMMQ…LEHAIHRAVV (230 aa). ATP-binding positions include 215 to 222 and 278 to 287; these read GETGTGKE and ADNGTLFLDE. Residues 479 to 498 constitute a DNA-binding region (H-T-H motif); that stretch reads WAACARALEMDVANLHRLAK.

It functions in the pathway nitrogen metabolism; nitric oxide reduction. Its function is as follows. Required for the expression of anaerobic nitric oxide (NO) reductase, acts as a transcriptional activator for at least the norVW operon. Activation also requires sigma-54. The sequence is that of Anaerobic nitric oxide reductase transcription regulator NorR from Enterobacter sp. (strain 638).